The following is a 414-amino-acid chain: Esterase FrsA (414 aa).

It belongs to the FrsA family.

It catalyses the reaction a carboxylic ester + H2O = an alcohol + a carboxylate + H(+). In terms of biological role, catalyzes the hydrolysis of esters. The polypeptide is Esterase FrsA (Escherichia coli O45:K1 (strain S88 / ExPEC)).